Consider the following 235-residue polypeptide: Carboxy-S-adenosyl-L-methionine synthase (235 aa).

S-adenosyl-L-methionine contacts are provided by residues Tyr35, 60 to 62 (GCS), 83 to 84 (DN), Asn124, and Arg191.

It belongs to the class I-like SAM-binding methyltransferase superfamily. Cx-SAM synthase family. Homodimer.

It catalyses the reaction prephenate + S-adenosyl-L-methionine = carboxy-S-adenosyl-L-methionine + 3-phenylpyruvate + H2O. Its function is as follows. Catalyzes the conversion of S-adenosyl-L-methionine (SAM) to carboxy-S-adenosyl-L-methionine (Cx-SAM). This chain is Carboxy-S-adenosyl-L-methionine synthase, found in Campylobacter jejuni subsp. jejuni serotype O:2 (strain ATCC 700819 / NCTC 11168).